We begin with the raw amino-acid sequence, 248 residues long: 1,2-phenylacetyl-CoA epoxidase, subunit C (248 aa).

Residues 76 to 79 and 177 to 179 contribute to the substrate site; these read QFSN and IAL.

Forms a stable heterotetramer (dimer of heterodimers) with PaaA and a stable heterodimer with PaaB.

It functions in the pathway aromatic compound metabolism; phenylacetate degradation. Its function is as follows. Component of 1,2-phenylacetyl-CoA epoxidase multicomponent enzyme system which catalyzes the reduction of phenylacetyl-CoA (PA-CoA) to form 1,2-epoxyphenylacetyl-CoA. The subunit C may be essential for structural integrity of the alpha subunit. The chain is 1,2-phenylacetyl-CoA epoxidase, subunit C (paaC) from Escherichia coli (strain K12).